A 146-amino-acid polypeptide reads, in one-letter code: Regulator of ribonuclease activity B (146 aa).

Residues 110–146 (WGTYFEDPDGEEEEGDEFDQDDEDGPADRDEVPATRH) form a disordered region. The span at 115 to 134 (EDPDGEEEEGDEFDQDDEDG) shows a compositional bias: acidic residues. A compositionally biased stretch (basic and acidic residues) spans 135-146 (PADRDEVPATRH).

This sequence belongs to the RraB family. As to quaternary structure, interacts with the C-terminal region of Rne.

The protein localises to the cytoplasm. Functionally, globally modulates RNA abundance by binding to RNase E (Rne) and regulating its endonucleolytic activity. Can modulate Rne action in a substrate-dependent manner by altering the composition of the degradosome. The chain is Regulator of ribonuclease activity B from Sodalis glossinidius (strain morsitans).